The primary structure comprises 764 residues: Probable cyclic nucleotide-gated ion channel 20, chloroplastic (764 aa).

The transit peptide at 1 to 25 (MASHNENDDIPMLPISDPSSRTRAR) directs the protein to the chloroplast. The interval 1–40 (MASHNENDDIPMLPISDPSSRTRARAFTSRSRSVSLSNPT) is disordered. Positions 19–33 (SSRTRARAFTSRSRS) are enriched in low complexity. The Stromal segment spans residues 26-204 (AFTSRSRSVS…PHAKEVQTWT (179 aa)). Residues 205-225 (KFFALSCLLAIFIDPLFFFLI) traverse the membrane as a helical segment. Residues 226–242 (KVQEQNKCIMIDWPMTK) lie on the Lumenal side of the membrane. A helical membrane pass occupies residues 243-263 (AFVAVRSVTDVIFTMNILLQF). Residues 264–295 (RLAYVARESTVVGAGQLVSHPKKIALHYLKGK) lie on the Stromal side of the membrane. Residues 296 to 316 (FFLDLFIVMPLPQILILWIIP) form a helical membrane-spanning segment. Over 317-329 (AHLGASGANYAKN) the chain is Lumenal. A helical transmembrane segment spans residues 330 to 350 (LLRAAVLFQYIPKLYRLLPFL). Residues 351–366 (AGQTPTGFIFESAWAN) lie on the Stromal side of the membrane. A helical membrane pass occupies residues 367 to 387 (FVINLLTFMLAGHVVGSCWYL). At 388-488 (FGLQRVNQCL…GNQVPSYFLG (101 aa)) the chain is on the lumenal side. Residues 489–509 (EVFFTMGIIGLGLLLFALLIG) form a helical membrane-spanning segment. The Stromal segment spans residues 510-764 (NMQNFLQALG…LCTPQSSYSL (255 aa)). A nucleoside 3',5'-cyclic phosphate is bound by residues 593 to 710 (IFSL…EDVT) and E658. The tract at residues 713 to 729 (FSRFLRSHRVQGAIRYD) is calmodulin-binding. The IQ domain occupies 734–763 (RLRAARQIQVAWRYRRRRLHRLCTPQSSYS).

It belongs to the cyclic nucleotide-gated cation channel (TC 1.A.1.5) family. In terms of assembly, homotetramer or heterotetramer.

It is found in the plastid. The protein resides in the chloroplast thylakoid membrane. Probable cyclic nucleotide-gated ion channel. The protein is Probable cyclic nucleotide-gated ion channel 20, chloroplastic (CNGC20) of Arabidopsis thaliana (Mouse-ear cress).